Consider the following 396-residue polypeptide: Lipid-A-disaccharide synthase (396 aa).

The protein belongs to the LpxB family.

The catalysed reaction is a lipid X + a UDP-2-N,3-O-bis[(3R)-3-hydroxyacyl]-alpha-D-glucosamine = a lipid A disaccharide + UDP + H(+). It functions in the pathway bacterial outer membrane biogenesis; LPS lipid A biosynthesis. Its function is as follows. Condensation of UDP-2,3-diacylglucosamine and 2,3-diacylglucosamine-1-phosphate to form lipid A disaccharide, a precursor of lipid A, a phosphorylated glycolipid that anchors the lipopolysaccharide to the outer membrane of the cell. This Hahella chejuensis (strain KCTC 2396) protein is Lipid-A-disaccharide synthase.